We begin with the raw amino-acid sequence, 240 residues long: Small ribosomal subunit protein uS3 (240 aa).

Residues 39–107 form the KH type-2 domain; that stretch reads IREFIKEECK…ELHLNIVEVR (69 aa). Positions 212–222 are enriched in basic and acidic residues; that stretch reads PQARDRRHAEL. Residues 212–240 are disordered; sequence PQARDRRHAELQEGGGPRPQGGGRPRRDR. The span at 224 to 234 shows a compositional bias: gly residues; it reads EGGGPRPQGGG.

The protein belongs to the universal ribosomal protein uS3 family. In terms of assembly, part of the 30S ribosomal subunit. Forms a tight complex with proteins S10 and S14.

Its function is as follows. Binds the lower part of the 30S subunit head. Binds mRNA in the 70S ribosome, positioning it for translation. In Dinoroseobacter shibae (strain DSM 16493 / NCIMB 14021 / DFL 12), this protein is Small ribosomal subunit protein uS3.